We begin with the raw amino-acid sequence, 179 residues long: Large ribosomal subunit protein uL5 (179 aa).

This sequence belongs to the universal ribosomal protein uL5 family. In terms of assembly, part of the 50S ribosomal subunit; part of the 5S rRNA/L5/L18/L25 subcomplex. Contacts the 5S rRNA and the P site tRNA. Forms a bridge to the 30S subunit in the 70S ribosome.

In terms of biological role, this is one of the proteins that bind and probably mediate the attachment of the 5S RNA into the large ribosomal subunit, where it forms part of the central protuberance. In the 70S ribosome it contacts protein S13 of the 30S subunit (bridge B1b), connecting the 2 subunits; this bridge is implicated in subunit movement. Contacts the P site tRNA; the 5S rRNA and some of its associated proteins might help stabilize positioning of ribosome-bound tRNAs. The chain is Large ribosomal subunit protein uL5 from Francisella tularensis subsp. novicida (strain U112).